Consider the following 638-residue polypeptide: Sodium- and chloride-dependent glycine transporter 1 (638 aa).

A disordered region spans residues 1–30 (MAVAHGPVATSSPEQNGAVPSEATKKDQNL). Topologically, residues 1–40 (MAVAHGPVATSSPEQNGAVPSEATKKDQNLTRGNWGNQIE) are cytoplasmic. Helical transmembrane passes span 41 to 61 (FVLT…FPYL), 68 to 88 (GAFM…LFFM), and 120 to 140 (VSTY…YYFF). Over 141–217 (SSMTHVLPWA…LSDDIGDFGE (77 aa)) the chain is Extracellular. Asn169, Asn172, Asn182, and Asn188 each carry an N-linked (GlcNAc...) asparagine glycan. Transmembrane regions (helical) follow at residues 218–238 (VRLP…LCLI), 247–267 (VVYF…VRGV), 292–312 (VWGD…GGLI), 339–359 (SVYA…HLGV), 382–402 (LLPI…LLGL), 438–458 (VAGF…WLLL), 462–482 (YAAS…IMYI), 502–522 (LFFQ…ILIF), and 542–562 (VAIG…YALF). The Cytoplasmic segment spans residues 563–638 (QLCRTDGDTL…GSSRLQDSRI (76 aa)). Residue Thr603 is modified to Phosphothreonine. Residues Ser605 and Ser630 each carry the phosphoserine modification. Residues 627-638 (SNGSSRLQDSRI) are essential for interaction with EXOC1.

It belongs to the sodium:neurotransmitter symporter (SNF) (TC 2.A.22) family. SLC6A9 subfamily. Interacts with EXOC1; interaction increases the transporter capacity of SLC6A9 probably by promoting its insertion into the cell membrane. Interacts with EXOC3 and EXOC4. In terms of tissue distribution, found only in the white matter of the CNS. Found in the gray matter of CNS as well as in macrophages and mast cells in peripheral tissues.

Its subcellular location is the cell membrane. It catalyses the reaction glycine(out) + chloride(out) + 2 Na(+)(out) = glycine(in) + chloride(in) + 2 Na(+)(in). With respect to regulation, inhibited by sarcosine. Functionally, sodium- and chloride-dependent glycine transporter. Essential for regulating glycine concentrations at inhibitory glycinergic synapses. The chain is Sodium- and chloride-dependent glycine transporter 1 (Slc6a9) from Rattus norvegicus (Rat).